A 263-amino-acid chain; its full sequence is MKNAFKDALKAGRPQIGLWLGLANSYSAELVAGAGFDWLLIDGEHAPNNVQTVLTQLQAIAPYPSQPVVRPSWNDPVQIKQLLDVGAQTLLVPMVQNADEARDAVAATRYPPAGIRGVGSALARASRWNRIPDYLHEANDAMCVLVQIETREAMSNLASILDVDGIDGVFIGPADLSADMGFAGNPQHPAVQAAIENAIVQIRAAGKAPGILMANEALAKRYLELGALFVAVGVDTTLLARGAEALAARFGAEKKLSGASGVY.

His45 serves as the catalytic Proton acceptor. Gln147 is a binding site for substrate. A divalent metal cation is bound at residue Glu149. The substrate site is built by Ala174 and Asp175. An a divalent metal cation-binding site is contributed by Asp175.

Belongs to the HpcH/HpaI aldolase family. Homohexamer; trimer of dimers. Requires a divalent metal cation as cofactor.

The enzyme catalyses 4-hydroxy-2-oxoheptanedioate = succinate semialdehyde + pyruvate. It participates in aromatic compound metabolism; 4-hydroxyphenylacetate degradation; pyruvate and succinate semialdehyde from 4-hydroxyphenylacetate: step 7/7. In terms of biological role, catalyzes the reversible retro-aldol cleavage of 4-hydroxy-2-ketoheptane-1,7-dioate (HKHD) to pyruvate and succinic semialdehyde. In Salmonella arizonae (strain ATCC BAA-731 / CDC346-86 / RSK2980), this protein is 4-hydroxy-2-oxo-heptane-1,7-dioate aldolase.